The sequence spans 158 residues: Transcription elongation factor GreA (158 aa).

This sequence belongs to the GreA/GreB family.

Necessary for efficient RNA polymerase transcription elongation past template-encoded arresting sites. The arresting sites in DNA have the property of trapping a certain fraction of elongating RNA polymerases that pass through, resulting in locked ternary complexes. Cleavage of the nascent transcript by cleavage factors such as GreA or GreB allows the resumption of elongation from the new 3'terminus. GreA releases sequences of 2 to 3 nucleotides. This is Transcription elongation factor GreA from Agrobacterium fabrum (strain C58 / ATCC 33970) (Agrobacterium tumefaciens (strain C58)).